Here is a 242-residue protein sequence, read N- to C-terminus: UPF0073 membrane protein Rv1085c (242 aa).

7 helical membrane passes run 42–62, 67–87, 108–128, 133–153, 159–179, 186–206, and 222–242; these read VYSA…SWAV, AGLT…VSAT, SMIF…ALPA, VVLS…MCWP, VGVP…ATIL, ALVL…LYAV, and FHAC…FVVF.

This sequence belongs to the UPF0073 (Hly-III) family.

It is found in the cell membrane. This is UPF0073 membrane protein Rv1085c from Mycobacterium tuberculosis (strain ATCC 25618 / H37Rv).